Reading from the N-terminus, the 99-residue chain is Aspartyl/glutamyl-tRNA(Asn/Gln) amidotransferase subunit C (99 aa).

It belongs to the GatC family. In terms of assembly, heterotrimer of A, B and C subunits.

The catalysed reaction is L-glutamyl-tRNA(Gln) + L-glutamine + ATP + H2O = L-glutaminyl-tRNA(Gln) + L-glutamate + ADP + phosphate + H(+). It catalyses the reaction L-aspartyl-tRNA(Asn) + L-glutamine + ATP + H2O = L-asparaginyl-tRNA(Asn) + L-glutamate + ADP + phosphate + 2 H(+). In terms of biological role, allows the formation of correctly charged Asn-tRNA(Asn) or Gln-tRNA(Gln) through the transamidation of misacylated Asp-tRNA(Asn) or Glu-tRNA(Gln) in organisms which lack either or both of asparaginyl-tRNA or glutaminyl-tRNA synthetases. The reaction takes place in the presence of glutamine and ATP through an activated phospho-Asp-tRNA(Asn) or phospho-Glu-tRNA(Gln). The sequence is that of Aspartyl/glutamyl-tRNA(Asn/Gln) amidotransferase subunit C from Burkholderia vietnamiensis (strain G4 / LMG 22486) (Burkholderia cepacia (strain R1808)).